Consider the following 453-residue polypeptide: MTQQRQMDLAGFFSAGNVTHAHGAWRHTDASNDFLSGKYYQHIARTLERGKFDLLFLPDGLAVEDSYGDNLDTGVGLGGQGAVALEPASVVATMAAVTEHLGLGATISATYYPPYHVARVFATLDQLSGGRVSWNVVTSLNDAEARNFGINQHLEHDARYDRADEFLEAVKKLWNSWDEDALVLDKAAGVFADPAKVHYVDHHGEWLNVRGPLQVPRSPQGEPVILQAGLSPRGRRFAGKWAEAVFSLAPNLEVMQATYQGIKAEVDAAGRDPDQTKIFTAVMPVLGESQAVAQERLEYLNSLVHPEVGLSTLSSHTGINLAAYPLDTPIKDILRDLQDRNVPTQLHMFAAATHSEELTLAEMGRRYGTNVGFVPQWAGTGEQIADELIRHFEGGAADGFIISPAFLPGSYDEFVDQVVPVLQDRGYFRTEYQGNTLRDHLGLRVPQLQGQPS.

FMN is bound by residues Asp-59, Thr-106, His-156, Tyr-160, and Ser-231.

It belongs to the NtaA/SnaA/DszA monooxygenase family. Homodimer.

The protein resides in the cytoplasm. It carries out the reaction dibenzothiophene 5,5-dioxide + FMNH2 + NADH + O2 = 2'-hydroxybiphenyl-2-sulfinate + FMN + NAD(+) + H2O + H(+). It functions in the pathway sulfur metabolism; dibenzothiophene degradation. Catalyzes the second step of the '4S' desulfurization pathway that removes covalently bound sulfur from dibenzothiophene (DBT) without breaking carbon-carbon bonds. Metabolizes DBT-sulfone (DBTO2 or DBT 5,5-dioxide) to 2-(2'-hydroxyphenyl)benzene sulphinate (HBPS). The protein is Dibenzothiophene-sulfone monooxygenase of Rhodococcus erythropolis (Arthrobacter picolinophilus).